The primary structure comprises 293 residues: Pyridoxal 5'-phosphate synthase subunit PdxS (293 aa).

Residue Asp-23 participates in D-ribose 5-phosphate binding. The active-site Schiff-base intermediate with D-ribose 5-phosphate is the Lys-80. Gly-152 serves as a coordination point for D-ribose 5-phosphate. D-glyceraldehyde 3-phosphate is bound at residue Arg-164. D-ribose 5-phosphate-binding positions include Gly-213 and Gly-234–Ser-235.

Belongs to the PdxS/SNZ family. In terms of assembly, in the presence of PdxT, forms a dodecamer of heterodimers.

The catalysed reaction is aldehydo-D-ribose 5-phosphate + D-glyceraldehyde 3-phosphate + L-glutamine = pyridoxal 5'-phosphate + L-glutamate + phosphate + 3 H2O + H(+). The protein operates within cofactor biosynthesis; pyridoxal 5'-phosphate biosynthesis. Functionally, catalyzes the formation of pyridoxal 5'-phosphate from ribose 5-phosphate (RBP), glyceraldehyde 3-phosphate (G3P) and ammonia. The ammonia is provided by the PdxT subunit. Can also use ribulose 5-phosphate and dihydroxyacetone phosphate as substrates, resulting from enzyme-catalyzed isomerization of RBP and G3P, respectively. This Dehalococcoides mccartyi (strain ATCC BAA-2100 / JCM 16839 / KCTC 5957 / BAV1) protein is Pyridoxal 5'-phosphate synthase subunit PdxS.